The primary structure comprises 458 residues: GTPase Der (458 aa).

2 consecutive EngA-type G domains span residues 3 to 167 (PVVV…PETE) and 176 to 351 (IKLA…AQYT). GTP is bound by residues 9–16 (GRPNVGKS), 56–60 (DTGGF), 119–122 (NKID), 182–189 (GRPNVGKS), 229–233 (DTAGL), and 294–297 (NKWD). The KH-like domain occupies 352–436 (FNIKTGELNN…PIRLFFREKP (85 aa)).

Belongs to the TRAFAC class TrmE-Era-EngA-EngB-Septin-like GTPase superfamily. EngA (Der) GTPase family. As to quaternary structure, associates with the 50S ribosomal subunit.

Functionally, GTPase that plays an essential role in the late steps of ribosome biogenesis. In Desulfosudis oleivorans (strain DSM 6200 / JCM 39069 / Hxd3) (Desulfococcus oleovorans), this protein is GTPase Der.